A 236-amino-acid chain; its full sequence is LexA repressor (236 aa).

Residues 1–25 (MNDSNDTSVAGGAAGADSRVLSADS) form a disordered region. Residues 51 to 71 (IREIGDAVGLTSTSSVAHQLR) constitute a DNA-binding region (H-T-H motif). Catalysis depends on for autocatalytic cleavage activity residues S160 and K197.

The protein belongs to the peptidase S24 family. Homodimer.

It carries out the reaction Hydrolysis of Ala-|-Gly bond in repressor LexA.. In terms of biological role, represses a number of genes involved in the response to DNA damage (SOS response), including recA and lexA. In the presence of single-stranded DNA, RecA interacts with LexA causing an autocatalytic cleavage which disrupts the DNA-binding part of LexA, leading to derepression of the SOS regulon and eventually DNA repair. The protein is LexA repressor of Mycobacterium tuberculosis (strain ATCC 25177 / H37Ra).